The chain runs to 323 residues: tRNA N6-adenosine threonylcarbamoyltransferase (323 aa).

Residues His-110 and His-114 each coordinate Fe cation. Residues Val-131 to Gly-135, Asp-164, Gly-177, and Asn-264 each bind substrate. A Fe cation-binding site is contributed by Asp-288.

Belongs to the KAE1 / TsaD family. It depends on Fe(2+) as a cofactor.

The protein resides in the cytoplasm. It catalyses the reaction L-threonylcarbamoyladenylate + adenosine(37) in tRNA = N(6)-L-threonylcarbamoyladenosine(37) in tRNA + AMP + H(+). In terms of biological role, required for the formation of a threonylcarbamoyl group on adenosine at position 37 (t(6)A37) in tRNAs that read codons beginning with adenine. Is involved in the transfer of the threonylcarbamoyl moiety of threonylcarbamoyl-AMP (TC-AMP) to the N6 group of A37, together with TsaE and TsaB. TsaD likely plays a direct catalytic role in this reaction. This is tRNA N6-adenosine threonylcarbamoyltransferase from Thermus thermophilus (strain ATCC BAA-163 / DSM 7039 / HB27).